A 332-amino-acid chain; its full sequence is tRNA-dihydrouridine synthase B (332 aa).

FMN contacts are provided by residues 16–18 and Gln-70; that span reads PMA. Cys-100 functions as the Proton donor in the catalytic mechanism. FMN is bound by residues Lys-139, 200 to 202, and 224 to 225; these read NGD and GR.

Belongs to the Dus family. DusB subfamily. FMN is required as a cofactor.

The enzyme catalyses a 5,6-dihydrouridine in tRNA + NAD(+) = a uridine in tRNA + NADH + H(+). It catalyses the reaction a 5,6-dihydrouridine in tRNA + NADP(+) = a uridine in tRNA + NADPH + H(+). Functionally, catalyzes the synthesis of 5,6-dihydrouridine (D), a modified base found in the D-loop of most tRNAs, via the reduction of the C5-C6 double bond in target uridines. In Xanthomonas axonopodis pv. citri (strain 306), this protein is tRNA-dihydrouridine synthase B.